Reading from the N-terminus, the 406-residue chain is Argininosuccinate synthase (406 aa).

ATP is bound by residues 12–20 (AYSGGLDTS) and A39. Residues Y90 and S95 each coordinate L-citrulline. An ATP-binding site is contributed by G120. Residues T122, N126, and D127 each contribute to the L-aspartate site. Residue N126 participates in L-citrulline binding. R130, S179, S188, E264, and Y276 together coordinate L-citrulline.

Belongs to the argininosuccinate synthase family. Type 1 subfamily. As to quaternary structure, homotetramer.

The protein localises to the cytoplasm. The catalysed reaction is L-citrulline + L-aspartate + ATP = 2-(N(omega)-L-arginino)succinate + AMP + diphosphate + H(+). The protein operates within amino-acid biosynthesis; L-arginine biosynthesis; L-arginine from L-ornithine and carbamoyl phosphate: step 2/3. The protein is Argininosuccinate synthase of Geobacter sp. (strain M21).